Reading from the N-terminus, the 317-residue chain is ADP-L-glycero-D-manno-heptose-6-epimerase (317 aa).

Residues 10 to 11 (FI), 31 to 32 (DD), Lys-38, Lys-53, 75 to 79 (QGACS), and Asn-92 contribute to the NADP(+) site. Tyr-139 functions as the Proton acceptor in the catalytic mechanism. Lys-143 serves as a coordination point for NADP(+). Residue Asn-166 participates in substrate binding. NADP(+) is bound by residues Val-167 and Lys-175. Residue Lys-175 is the Proton acceptor of the active site. Substrate-binding positions include Gly-177, His-184, 198-201 (FEGV), Arg-211, and Tyr-275.

This sequence belongs to the NAD(P)-dependent epimerase/dehydratase family. HldD subfamily. In terms of assembly, homopentamer. Requires NADP(+) as cofactor.

It catalyses the reaction ADP-D-glycero-beta-D-manno-heptose = ADP-L-glycero-beta-D-manno-heptose. It participates in nucleotide-sugar biosynthesis; ADP-L-glycero-beta-D-manno-heptose biosynthesis; ADP-L-glycero-beta-D-manno-heptose from D-glycero-beta-D-manno-heptose 7-phosphate: step 4/4. Functionally, catalyzes the interconversion between ADP-D-glycero-beta-D-manno-heptose and ADP-L-glycero-beta-D-manno-heptose via an epimerization at carbon 6 of the heptose. In Shewanella piezotolerans (strain WP3 / JCM 13877), this protein is ADP-L-glycero-D-manno-heptose-6-epimerase.